We begin with the raw amino-acid sequence, 1985 residues long: MAAHNILLFGDQADAPIPMIRRIVEKSRYSKNLEYFLQSAVDNVQLEVAKLTPAERETVGSFQSVQDLITALTSKSDRHGIAQMVLVFIARIGELILHAESNPTLLSSSTPLLSLGICGGLLPAAAAAVATNVGELVEVASYMAGVNCRVAAMISRRSLQIEDNAGSWAFSVLGKLVMQLPTILDGFHNEQSIPRHRRAYIAISTPTWATVFGPPSVLKKLLETSAALSKSDITILPAFGAVHAGHLAAPEFEELVDESPLLNKSIKSGYKLLSGSKYAPFAGSSLRDLLPQIMLDIFQNSTNPSRLFEVGGSYLQKGKELSLYMLGATSYLVLLRRSLHAQGFDVALKTNAPILQASELRGGSGSVAIIGMSGQFPGASSVDEMWELLMQREELHKKIPSDRFNADDYLDETGRGFNAITTAYGCFLEHPGLFDHKMFNVSPREAMQMDPGQRLVMHAVYEALEDAGVANNGSVATDSKRIGTYIGDGSDDWRELQQPHGVDKYILQGTQRSFTPGRLNHHFKWEGATFCVDSACGSTASAVGLAYRALVNRDCDTAIAGGSNIIATPFWQSALSKGGFLSTTGGCKTFRGDADGYCRGEAIGVIVLKRLEDALYDNDNIISVIRSYARNHSADTVSITRPHVPAQERVYRRVLQKAGLEPNDISYVEMHGTGTTAGDSAELESVVNILAQKGERETPLVVGAIKANLGHSEAASGISSIMKAAIMFRKGVIPPQVGIPQKLGNFECLERGSVLIPGNPIPYTRQSIGKKRTMIVNNFDAAGGNSCFVLEEPPVPQIKAPDPRPYHVVTVSAHCPQSLERNEQLLRQFLLDNADISLADLAYTTTARRMHHSMRSAYSGNSIKAIVDGINRVLSKKKEAPTARKPPVVFAFTGQGAHYAGMGADLFRSSQAFRATITSLQRICESHGFPPFVQLISKSESPVEKATTVQIHLALIALEIALADLWKTWGIAPDLVIGHSIGEYAALYAAGVLSATDAMYIVGRRATLIQENCKEGTHGMLSISGTSDDVAAILSDERIMSSCEVACRNSPGMIVLSGEHEELLQIEGLLKDQQIKCRLLDVPYAMHSHQMDGIVEGLREAAQGVLFGTPRVKVISTLLGVEHTKFDSDYLVRHTRQAVNFEQAISHCTSHGLVDKTSLWLEIGPNPVSLGLIRSNTNVTSDRALHSLKNGDDNWKSISATLASFYKAGMSIQWREYHRDFANNLSLITLPKYAFDTRDFWMKYTEGQRHSEVQPISTCLHRLVKQEDTAKEQHATFTAEIGHPSLLKIIKGHKLSGITVCPAGVFSEMSLTAARYLLTNGSSKASFPSLSVLDTQIDHPIMPKADSKQTVQVEINRSKQSNEFFVSIADQAKPSVINSKCVVRLRDEHAFDLERRQMLEVIQPKIAKLTKAAAGGRANRFQGKLFYRLFANLMDYTGQYEGVQEAIVSSDFTEALATVQLPKAQSSGESWTLSPYWIDALTHLAGFLFNGNPMNSGDYVFIGIHMERMEIVAKDLSTDVTYQCYAFIEQSEGSDIYRGHVYILDGDLIVGFLEGARFRKMPRTTLHRILGKAEPVKNTKQVPHPTTNGSAIANGVNRNPSHNEPSTPPVANGVNGTNGDQSDRKSLYSVLVQQLIEETGMEESELTPSTFFVEIGVDSLMSISILAALKAETGTELNASFLMDYPTLEDAQRELRRLEGKDSVNSNDQSTMVNGKEKTRECNVVLMQGPSSSTSRKPVFLIADGAGSAAAYIHFPKLGQDLPVYAVESPWVNDPENFVCSFDEAAAMYLAAIRSKQPHGPYILGGWSAGGVFAYEVARLLLEAGERVLGLIIIDITGPRHEDRSKVESPTMEIIDQIGMLSGIERNFDDTTTQSRRLKQHMLSTVTCFSKMDPTPMSPGRHPDCTFVIWAKKDILPKAALDTLPAGLNAWFYPSSHDLGPNGWDALVGNKMEYFQIEGDHFSIMTAPEVTQLGKIIQEAIGKIS.

The N-terminal acylcarrier protein transacylase (SAT) domain stretch occupies residues 7 to 243 (LLFGDQADAP…TILPAFGAVH (237 aa)). In terms of domain architecture, Ketosynthase family 3 (KS3) spans 364–792 (SGSVAIIGMS…GGNSCFVLEE (429 aa)). Residues Cys536, His671, and His711 each act as for beta-ketoacyl synthase activity in the active site. A malonyl-CoA:ACP transacylase (MAT) domain region spans residues 889-1148 (VFAFTGQGAH…VNFEQAISHC (260 aa)). Residue Ser980 is the For acyl/malonyl transferase activity of the active site. Residues 1261 to 1392 (HRLVKQEDTA…VRLRDEHAFD (132 aa)) form an N-terminal hotdog fold region. Positions 1261–1567 (HRLVKQEDTA…FRKMPRTTLH (307 aa)) constitute a PKS/mFAS DH domain. The product template (PT) domain stretch occupies residues 1265–1566 (KQEDTAKEQH…RFRKMPRTTL (302 aa)). His1293 functions as the Proton acceptor; for dehydratase activity in the catalytic mechanism. Positions 1414 to 1567 (AGGRANRFQG…FRKMPRTTLH (154 aa)) are C-terminal hotdog fold. Asp1479 acts as the Proton donor; for dehydratase activity in catalysis. Polar residues predominate over residues 1578-1605 (NTKQVPHPTTNGSAIANGVNRNPSHNEP). The disordered stretch occupies residues 1578 to 1622 (NTKQVPHPTTNGSAIANGVNRNPSHNEPSTPPVANGVNGTNGDQS). The 78-residue stretch at 1622–1699 (SDRKSLYSVL…DAQRELRRLE (78 aa)) folds into the Carrier domain. Position 1659 is an O-(pantetheine 4'-phosphoryl)serine (Ser1659). The tract at residues 1719–1913 (TRECNVVLMQ…DCTFVIWAKK (195 aa)) is thioesterase (TE) domain.

It participates in secondary metabolite biosynthesis; terpenoid biosynthesis. Functionally, non-reducing polyketide synthase; part of the gene cluster that mediates the biosynthesis of the meroterpenoids nectripenoids A and B, as well as cochliquninone D and isocochliquninone E. The pathway probably begins with the HR-PKS ntnH that catalyzes two chain-extension steps to form a reduced triketide, which then primes the SAT domain in the NR-PKS ntnG to initiate three more cycles of extension to give a linear hexaketide corresponding to the polyketide part of nectripenoids. The FAD-dependent monooxygenase ntnJ then performs an oxidative decarboxylation at C11 of the ntnH/ntnG product, via an electrophilic aromatic hydroxylation with concomitant ipso-decarboxylation. The membrane-bound polyprenyl transferase ntnF then introduces a farnesyl group before the FAD-dependent monooxygenase ntnK functions as the first epoxidase on terminal C12'-C13' olefin, followed by a second epoxidation on C7'-C8' catalyzed by ntnA. The terpene cyclase/mutase ntnI then initiates the sequential tricyclic ring formation through protonation of the terminal epoxide and catalyzes the regioselective and stereoselective 6/6/6-tricyclic ring formation. The cytochrome P450 monooxygenase ntnM may then hydroxylate C1'. In Nectria sp, this protein is Non-reducing polyketide synthase ntnG.